The sequence spans 318 residues: MLHHHCRRNPELQEESQIQAAVAAGDVHTVRKMLEQGYSPNGRDANGWTLLHFSAARGKERCVRVFLEHGADPTVKDLIGGFTALHYAAMHGRARIARLMLESEYRSDIINAKSNDGWTPLHVAAHYGRDSFVRLLLEFKAEVDPLSDKGTTPLQLAIIRERSSCVKILLDHNANIDIQNGFLLRYAVIKSNHSYCRMFLQRGADTNLGRLEDGQTPLHLSALRDDVLCARMLYNYGADTNTRNYEGQTPLAVSISISGSSRPCLDFLQEVTRQPRNLQDLCRIKIRQCIGLQNLKLLDELPIAKVMKDYLKHKSDDI.

ANK repeat units follow at residues 13 to 42 (QEES…SPNG), 46 to 75 (NGWT…DPTV), 80 to 109 (GGFT…RSDI), 116 to 145 (DGWT…EVDP), 149 to 178 (KGTT…NIDI), 180 to 208 (NGFL…DTNL), and 213 to 242 (DGQT…DTNT). Residues 265-318 (LDFLQEVTRQPRNLQDLCRIKIRQCIGLQNLKLLDELPIAKVMKDYLKHKSDDI) enclose the SOCS box domain.

This sequence belongs to the ankyrin SOCS box (ASB) family. As to quaternary structure, interacts with CUL5. Interacts with RNF7. Interacts with PSRC1.

It functions in the pathway protein modification; protein ubiquitination. Functionally, probable substrate-recognition component of a SCF-like ECS (Elongin-Cullin-SOCS-box protein) E3 ubiquitin-protein ligase complex which mediates the ubiquitination and subsequent proteasomal degradation of target proteins. Plays a role in spindle dynamics and genome integrity by targeting the mitotic progression protein PSRC1 for proteasomal degradation in a cell cycle-dependent manner. Also participates in meiosis by mediating the proper attachment between kinetochores and microtubules. This chain is Ankyrin repeat and SOCS box protein 7 (ASB7), found in Pongo abelii (Sumatran orangutan).